The following is a 210-amino-acid chain: Outer-membrane lipoprotein LolB (210 aa).

An N-terminal signal peptide occupies residues M1 to G29. C30 carries N-palmitoyl cysteine lipidation. Residue C30 is the site of S-diacylglycerol cysteine attachment.

This sequence belongs to the LolB family. As to quaternary structure, monomer.

Its subcellular location is the cell outer membrane. Its function is as follows. Plays a critical role in the incorporation of lipoproteins in the outer membrane after they are released by the LolA protein. The sequence is that of Outer-membrane lipoprotein LolB from Coxiella burnetii (strain CbuK_Q154) (Coxiella burnetii (strain Q154)).